The chain runs to 7756 residues: Linear gramicidin synthase subunit C (7756 aa).

Carrier domains lie at 977-1052 (EPRN…AALQ), 2042-2116 (APAT…ADSS), 3557-3632 (APRT…ASLL), 4621-4695 (APAT…TVTD), 6141-6216 (APRK…AGLL), and 7200-7274 (APET…GDSV). O-(pantetheine 4'-phosphoryl)serine occurs at positions 1012, 2077, 3592, 4656, 6176, and 7235.

The protein belongs to the ATP-dependent AMP-binding enzyme family. Large multienzyme complex composed of 4 subunits; LgrA, LgrB, LgrC and LgrD. Requires pantetheine 4'-phosphate as cofactor.

Functionally, activates the 7th to 12th amino acids (Val, D-Val, Trp, D-Leu, Xaa and D-Leu) in linear gramicidin and catalyzes the formation of the peptide bond between them. This enzyme is also responsible for the epimerization of the 8th (D-Val), the 10th (D-Leu) and 12th (D-Leu) amino acids. The 11th (Xaa) amino acid is Trp in linear gramicidin A; Phe in linear gramicidin B and Tyr in linear gramicidin C. This Brevibacillus parabrevis protein is Linear gramicidin synthase subunit C (lgrC).